The primary structure comprises 500 residues: Probable malate:quinone oxidoreductase (500 aa).

Belongs to the MQO family. It depends on FAD as a cofactor.

The enzyme catalyses (S)-malate + a quinone = a quinol + oxaloacetate. The protein operates within carbohydrate metabolism; tricarboxylic acid cycle; oxaloacetate from (S)-malate (quinone route): step 1/1. This Bacillus cereus (strain B4264) protein is Probable malate:quinone oxidoreductase.